The sequence spans 358 residues: Peptide chain release factor 1 (358 aa).

N5-methylglutamine is present on Gln-237.

It belongs to the prokaryotic/mitochondrial release factor family. Post-translationally, methylated by PrmC. Methylation increases the termination efficiency of RF1.

The protein localises to the cytoplasm. In terms of biological role, peptide chain release factor 1 directs the termination of translation in response to the peptide chain termination codons UAG and UAA. In Mycoplasma mobile (strain ATCC 43663 / 163K / NCTC 11711) (Mesomycoplasma mobile), this protein is Peptide chain release factor 1.